The chain runs to 194 residues: Crossover junction endodeoxyribonuclease RuvC (194 aa).

Residues aspartate 8, glutamate 72, and aspartate 144 contribute to the active site. Aspartate 8, glutamate 72, and aspartate 144 together coordinate Mg(2+).

This sequence belongs to the RuvC family. In terms of assembly, homodimer which binds Holliday junction (HJ) DNA. The HJ becomes 2-fold symmetrical on binding to RuvC with unstacked arms; it has a different conformation from HJ DNA in complex with RuvA. In the full resolvosome a probable DNA-RuvA(4)-RuvB(12)-RuvC(2) complex forms which resolves the HJ. Mg(2+) serves as cofactor.

It localises to the cytoplasm. The enzyme catalyses Endonucleolytic cleavage at a junction such as a reciprocal single-stranded crossover between two homologous DNA duplexes (Holliday junction).. Functionally, the RuvA-RuvB-RuvC complex processes Holliday junction (HJ) DNA during genetic recombination and DNA repair. Endonuclease that resolves HJ intermediates. Cleaves cruciform DNA by making single-stranded nicks across the HJ at symmetrical positions within the homologous arms, yielding a 5'-phosphate and a 3'-hydroxyl group; requires a central core of homology in the junction. The consensus cleavage sequence is 5'-(A/T)TT(C/G)-3'. Cleavage occurs on the 3'-side of the TT dinucleotide at the point of strand exchange. HJ branch migration catalyzed by RuvA-RuvB allows RuvC to scan DNA until it finds its consensus sequence, where it cleaves and resolves the cruciform DNA. This Psychrobacter cryohalolentis (strain ATCC BAA-1226 / DSM 17306 / VKM B-2378 / K5) protein is Crossover junction endodeoxyribonuclease RuvC.